The following is a 98-amino-acid chain: Feather beta keratin (98 aa).

At serine 2 the chain carries N-acetylserine.

This sequence belongs to the avian keratin family. As to quaternary structure, the avian keratins (F-ker, S-ker, C-ker and B-ker) are a complex mixture of very similar polypeptides.

This Cathartes aura (Turkey vulture) protein is Feather beta keratin.